The sequence spans 306 residues: Probable cobalamin biosynthesis protein CobD (306 aa).

5 helical membrane passes run 54–74, 88–108, 155–175, 215–235, and 286–306; these read LFGF…TYEI, ISIY…IEFS, ITDS…PGAF, IAGM…KSAI, and SLKA…VLLM.

This sequence belongs to the CobD/CbiB family.

Its subcellular location is the cell membrane. It participates in cofactor biosynthesis; adenosylcobalamin biosynthesis. Functionally, converts cobyric acid to cobinamide by the addition of aminopropanol on the F carboxylic group. The polypeptide is Probable cobalamin biosynthesis protein CobD (Methanococcus maripaludis (strain C7 / ATCC BAA-1331)).